The sequence spans 305 residues: Oxygen-dependent coproporphyrinogen-III oxidase (305 aa).

Residue Ser-93 participates in substrate binding. Residues His-97 and His-107 each coordinate a divalent metal cation. His-107 serves as the catalytic Proton donor. 109-111 (NVR) contributes to the substrate binding site. A divalent metal cation-binding residues include His-146 and His-176. Residues 241–276 (YVEFNLVFDRGTLFGLQSGGRTESILMSLPPQVRWG) are important for dimerization. 259-261 (GGR) serves as a coordination point for substrate.

This sequence belongs to the aerobic coproporphyrinogen-III oxidase family. In terms of assembly, homodimer. A divalent metal cation serves as cofactor.

The protein localises to the cytoplasm. It catalyses the reaction coproporphyrinogen III + O2 + 2 H(+) = protoporphyrinogen IX + 2 CO2 + 2 H2O. It participates in porphyrin-containing compound metabolism; protoporphyrin-IX biosynthesis; protoporphyrinogen-IX from coproporphyrinogen-III (O2 route): step 1/1. Involved in the heme biosynthesis. Catalyzes the aerobic oxidative decarboxylation of propionate groups of rings A and B of coproporphyrinogen-III to yield the vinyl groups in protoporphyrinogen-IX. In Pseudomonas aeruginosa (strain LESB58), this protein is Oxygen-dependent coproporphyrinogen-III oxidase.